Reading from the N-terminus, the 803-residue chain is Phenylalanine--tRNA ligase beta subunit (803 aa).

A tRNA-binding domain is found at 39–152 (TPGFQKVVAG…PDASPGADAA (114 aa)). One can recognise a B5 domain in the interval 406–480 (RQPVTIELRP…RLYGYNRIPV (75 aa)). Asp458, Asp464, Glu467, and Glu468 together coordinate Mg(2+). One can recognise an FDX-ACB domain in the interval 709-802 (PRFPAVERDL…LEERLGASLR (94 aa)).

It belongs to the phenylalanyl-tRNA synthetase beta subunit family. Type 1 subfamily. Tetramer of two alpha and two beta subunits. Mg(2+) serves as cofactor.

Its subcellular location is the cytoplasm. The enzyme catalyses tRNA(Phe) + L-phenylalanine + ATP = L-phenylalanyl-tRNA(Phe) + AMP + diphosphate + H(+). The chain is Phenylalanine--tRNA ligase beta subunit from Moorella thermoacetica (strain ATCC 39073 / JCM 9320).